Reading from the N-terminus, the 150-residue chain is N-alpha-acetyltransferase 30 (150 aa).

The N-acetyltransferase domain occupies 2–150 (VTIVPYSHQY…DAFRYILYPN (149 aa)).

It belongs to the acetyltransferase family. MAK3 subfamily.

Its subcellular location is the cytoplasm. It is found in the nucleus. The enzyme catalyses N-terminal L-methionyl-L-leucyl-[protein] + acetyl-CoA = N-terminal N(alpha)-acetyl-L-methionyl-L-leucyl-[protein] + CoA + H(+). The catalysed reaction is N-terminal L-methionyl-L-isoleucyl-[protein] + acetyl-CoA = N-terminal N(alpha)-acetyl-L-methionyl-L-isoleucyl-[protein] + CoA + H(+). It catalyses the reaction N-terminal L-methionyl-L-phenylalanyl-[protein] + acetyl-CoA = N-terminal N(alpha)-acetyl-L-methionyl-L-phenylalanyl-[protein] + CoA + H(+). It carries out the reaction N-terminal L-methionyl-L-tryptophyl-[protein] + acetyl-CoA = N-terminal N(alpha)-acetyl-L-methionyl-L-tryptophyl-[protein] + CoA + H(+). The enzyme catalyses N-terminal L-methionyl-L-tyrosyl-[protein] + acetyl-CoA = N-terminal N(alpha)-acetyl-L-methionyl-L-tyrosyl-[protein] + CoA + H(+). In terms of biological role, catalytic component of the NatC N-terminal acetyltransferase. The protein is N-alpha-acetyltransferase 30 (naa30) of Schizosaccharomyces pombe (strain 972 / ATCC 24843) (Fission yeast).